The following is a 208-amino-acid chain: MINFVFVGPFRCLPVPCPEDLLVEDLVDGLLSLEDELKDQREEEESVLDGVLSLEEESRLRWGPVGEEAPPRGETHRDRQRRAEEKRKRKREREKEEEKQIAEFLKRKREKEAWRRRRAEEKAADRARRKLEEEERRERKWRQTEQGAKQRSARKEKMTELGVDGYARQLESEAESLEAERGRLLQENDDLMGEVNYWQRRLEAMWSQ.

Residues 59 to 93 (RLRWGPVGEEAPPRGETHRDRQRRAEEKRKRKRER) are disordered. Positions 69–86 (APPRGETHRDRQRRAEEK) are enriched in basic and acidic residues. 3 short sequence motifs (nuclear localization signal) span residues 86-91 (KRKRKR), 115-119 (RRRRA), and 136-140 (RRERK). Basic and acidic residues predominate over residues 125–143 (DRARRKLEEEERRERKWRQ). The interval 125-160 (DRARRKLEEEERRERKWRQTEQGAKQRSARKEKMTE) is disordered.

The protein belongs to the HTLV-1 HBZ protein family. As to quaternary structure, interacts with host ATF4; this interaction inhibits viral RNA transcriptional activation by preventing ATF4 binding to Tax-responsive elements. Interacts with host CREB1; this interaction inhibits host CREB1 transcriptional activity. Interacts with host JUN, JUNB and JUND. Interacts with host EP300.

The protein localises to the host nucleus. Functionally, contributes to the regulation of viral RNA transcription by interacting with host proteins involved in transcriptional activation such as ATF4, or CREB1, and by inhibiting their activity. Additionally, HBZ suppresses host NF-kappa-B-driven transcription mediated by host RELA as well as transcription of some classical NF-kappa-B target genes, including IL8, IL2RA, IRF4, VCAM1, and VEGFA. The sequence is that of HTLV-1 basic zipper factor (HBZ) from Human T-cell leukemia virus 1 (isolate Melanesia mel5 subtype C) (HTLV-1).